Reading from the N-terminus, the 546-residue chain is CTP synthase (546 aa).

The interval 1–267 (MSKFVFVTGG…AQQTLELLNL (267 aa)) is amidoligase domain. Position 13 (Ser-13) interacts with CTP. Ser-13 lines the UTP pocket. Residues 14-19 (SIGKGI) and Asp-71 contribute to the ATP site. Mg(2+) is bound by residues Asp-71 and Glu-141. Residues 148–150 (DIE), 188–193 (KTKPTQ), and Lys-224 each bind CTP. UTP-binding positions include 188-193 (KTKPTQ) and Lys-224. Residues 292-534 (EIAIVGKYVQ…MKAALKGREE (243 aa)) enclose the Glutamine amidotransferase type-1 domain. Gly-354 contributes to the L-glutamine binding site. The Nucleophile; for glutamine hydrolysis role is filled by Cys-381. L-glutamine-binding positions include 382–385 (LGMQ), Glu-405, and Arg-462. Active-site residues include His-507 and Glu-509.

It belongs to the CTP synthase family. In terms of assembly, homotetramer.

It carries out the reaction UTP + L-glutamine + ATP + H2O = CTP + L-glutamate + ADP + phosphate + 2 H(+). It catalyses the reaction L-glutamine + H2O = L-glutamate + NH4(+). The enzyme catalyses UTP + NH4(+) + ATP = CTP + ADP + phosphate + 2 H(+). The protein operates within pyrimidine metabolism; CTP biosynthesis via de novo pathway; CTP from UDP: step 2/2. Allosterically activated by GTP, when glutamine is the substrate; GTP has no effect on the reaction when ammonia is the substrate. The allosteric effector GTP functions by stabilizing the protein conformation that binds the tetrahedral intermediate(s) formed during glutamine hydrolysis. Inhibited by the product CTP, via allosteric rather than competitive inhibition. Catalyzes the ATP-dependent amination of UTP to CTP with either L-glutamine or ammonia as the source of nitrogen. Regulates intracellular CTP levels through interactions with the four ribonucleotide triphosphates. This Microcystis aeruginosa (strain NIES-843 / IAM M-2473) protein is CTP synthase.